A 242-amino-acid chain; its full sequence is Probable porphobilinogen deaminase (242 aa).

It belongs to the HMBS family.

It catalyses the reaction 4 porphobilinogen + H2O = hydroxymethylbilane + 4 NH4(+). The protein operates within porphyrin-containing compound metabolism; protoporphyrin-IX biosynthesis; coproporphyrinogen-III from 5-aminolevulinate: step 2/4. Its function is as follows. Tetrapolymerization of the monopyrrole PBG into the hydroxymethylbilane pre-uroporphyrinogen in several discrete steps. The polypeptide is Probable porphobilinogen deaminase (hemC) (Chlamydia muridarum (strain MoPn / Nigg)).